The primary structure comprises 4043 residues: Hybrid PKS-NRPS synthetase thnA (4043 aa).

The Ketosynthase family 3 (KS3) domain occupies Leu-6–Glu-440. Residues Cys-179, His-319, and His-360 each act as for beta-ketoacyl synthase activity in the active site. Positions Val-558–Thr-894 are malonyl-CoA:ACP transacylase (MAT) domain. The tract at residues His-952–Pro-1090 is N-terminal hotdog fold. The dehydratase (DH) domain stretch occupies residues His-952–Thr-1256. One can recognise a PKS/mFAS DH domain in the interval His-952–Ala-1258. The active-site Proton acceptor; for dehydratase activity is His-984. The C-terminal hotdog fold stretch occupies residues Leu-1105 to Ala-1258. Asp-1166 functions as the Proton donor; for dehydratase activity in the catalytic mechanism. The segment at Leu-1417 to Ala-1591 is methyltransferase (MT) domain. The segment at Thr-2146–Ala-2320 is ketoreductase (KR) domain. The Carrier 1 domain maps to Glu-2434 to Leu-2512. An O-(pantetheine 4'-phosphoryl)serine modification is found at Ser-2472. The interval Gly-2521–Arg-2618 is disordered. Positions Gln-2527–Gln-2536 are enriched in low complexity. Residues Pro-2537–Val-2547 are compositionally biased toward pro residues. The segment covering Tyr-2578–Gln-2605 has biased composition (polar residues). A condensation (C) domain region spans residues Ile-2626 to Ala-3067. The interval Gln-3092–Ala-3496 is adenylation (A) domain. Residues Thr-3614–Ile-3695 form the Carrier 2 domain. O-(pantetheine 4'-phosphoryl)serine is present on Ser-3655. Residues Ile-3736 to Gln-3954 are reductase (R) domain.

This sequence in the C-terminal section; belongs to the NRP synthetase family.

It carries out the reaction malate + 6 malonyl-CoA + acetyl-CoA + 2 AH2 + 2 S-adenosyl-L-methionine + 5 NADPH + 9 H(+) = trihazone A + 2 A + 2 S-adenosyl-L-homocysteine + 6 CO2 + 5 NADP(+) + 7 CoA + 6 H2O. It participates in secondary metabolite biosynthesis. Its function is as follows. Hybrid PKS-NRPS synthetase; part of the gene cluster that produces the tetronate natural products trihazones. The PKS-NRPS synthetase thnA with the help of the trans-enoyl reductase thnE are responsible for the synthesis of the carboxylmethyl containing trihazone A. The PKS portion of thnA synthesizes beta-keto-triene chain from one acetyl-CoA and 6 equivalents of malonyl-CoA, in collaboration with thnE, which selectively reduces the enoyl intermediate during the first and fourth iteration of the PKS. The NRPS domain selects and activates malate, of which the alpha-hydroxyl group attacks the completed polyketide acyl-S-ACP chain to form the ester product. Intramolecular Dieckmann cyclization catalyzed by the terminal reductase domain releases the product as trihazone A from the PKS-NPRS. The pathway begins with the formation of trihazone A by the hybrid PKS-NRPS synthetase thnA and the trans-enoyl reductase thnE. Trihazone A is further decarboxylated by the 2-oxoglutarate-dependent dioxygenase thnC to produce trihazone D. The function of the FAD-dependent monooxygenase thnD has still to be identified. This chain is Hybrid PKS-NRPS synthetase thnA, found in Trichoderma harzianum (Hypocrea lixii).